The following is a 374-amino-acid chain: Cell division protein C (374 aa).

One can recognise an MIT domain in the interval 11–73 (ARKYAINAVK…YKRRIEVLKE (63 aa)). Position 144–151 (144–151 (GPPGCGKT)) interacts with ATP.

It belongs to the AAA ATPase family. Interacts with CdvB.

It is found in the cytoplasm. It localises to the nucleoid. Its function is as follows. Part of a cell division machinery. The CdvA, CdvB and CdvC proteins polymerize between segregating nucleoids and persist throughout cell division, forming a successively smaller structure during constriction. In Sulfolobus acidocaldarius (strain ATCC 33909 / DSM 639 / JCM 8929 / NBRC 15157 / NCIMB 11770), this protein is Cell division protein C.